Reading from the N-terminus, the 68-residue chain is DNA gyrase inhibitor YacG (68 aa).

Cysteine 12, cysteine 15, cysteine 30, and cysteine 34 together coordinate Zn(2+). The disordered stretch occupies residues 48-68 (KLKTQDAPTSGKGQHSDDYED).

It belongs to the DNA gyrase inhibitor YacG family. In terms of assembly, interacts with GyrB. Zn(2+) serves as cofactor.

In terms of biological role, inhibits all the catalytic activities of DNA gyrase by preventing its interaction with DNA. Acts by binding directly to the C-terminal domain of GyrB, which probably disrupts DNA binding by the gyrase. In Acinetobacter baylyi (strain ATCC 33305 / BD413 / ADP1), this protein is DNA gyrase inhibitor YacG.